The sequence spans 116 residues: MTEQADAAMPIQFTDAAAAKVKGLLEEEQNPALKLRVYVTGGGCSGFQYGFTFDEKVNEGDFTVEKQGVQLVVDPMSLQYLVGGEVDYTSGLEGSRFFVKNPNATTTCGCGASFSV.

Positions 44, 108, and 110 each coordinate iron-sulfur cluster.

This sequence belongs to the HesB/IscA family. In terms of assembly, homodimer. Iron-sulfur cluster serves as cofactor.

Required for insertion of 4Fe-4S clusters for at least IspG. The sequence is that of Iron-sulfur cluster insertion protein ErpA from Shewanella putrefaciens (strain CN-32 / ATCC BAA-453).